We begin with the raw amino-acid sequence, 315 residues long: Ribose-phosphate pyrophosphokinase (315 aa).

Residues 37–39 (DSE) and 96–97 (RQ) contribute to the ATP site. Residues H131 and D170 each coordinate Mg(2+). Residue K194 is part of the active site. D-ribose 5-phosphate-binding positions include R196, D220, and 224 to 228 (DTGGT).

Belongs to the ribose-phosphate pyrophosphokinase family. Class I subfamily. As to quaternary structure, homohexamer. The cofactor is Mg(2+).

It is found in the cytoplasm. The catalysed reaction is D-ribose 5-phosphate + ATP = 5-phospho-alpha-D-ribose 1-diphosphate + AMP + H(+). It functions in the pathway metabolic intermediate biosynthesis; 5-phospho-alpha-D-ribose 1-diphosphate biosynthesis; 5-phospho-alpha-D-ribose 1-diphosphate from D-ribose 5-phosphate (route I): step 1/1. Its function is as follows. Involved in the biosynthesis of the central metabolite phospho-alpha-D-ribosyl-1-pyrophosphate (PRPP) via the transfer of pyrophosphoryl group from ATP to 1-hydroxyl of ribose-5-phosphate (Rib-5-P). The polypeptide is Ribose-phosphate pyrophosphokinase (Marinomonas sp. (strain MWYL1)).